The sequence spans 120 residues: UPF0344 protein BCAH187_A1308 (120 aa).

A run of 4 helical transmembrane segments spans residues 6-26 (ITAW…YSAG), 32-52 (VHMG…WLYL), 64-84 (WYGL…MVLV), and 91-111 (ATGA…YLGL).

Belongs to the UPF0344 family.

The protein resides in the cell membrane. In Bacillus cereus (strain AH187), this protein is UPF0344 protein BCAH187_A1308.